The sequence spans 129 residues: Small ribosomal subunit protein uS11 (129 aa).

Belongs to the universal ribosomal protein uS11 family. As to quaternary structure, part of the 30S ribosomal subunit. Interacts with proteins S7 and S18. Binds to IF-3.

In terms of biological role, located on the platform of the 30S subunit, it bridges several disparate RNA helices of the 16S rRNA. Forms part of the Shine-Dalgarno cleft in the 70S ribosome. This is Small ribosomal subunit protein uS11 from Baumannia cicadellinicola subsp. Homalodisca coagulata.